The sequence spans 131 residues: Profilin (131 aa).

It belongs to the profilin family. Occurs in many kinds of cells as a complex with monomeric actin in a 1:1 ratio.

It is found in the cytoplasm. The protein resides in the cytoskeleton. In terms of biological role, binds to actin and affects the structure of the cytoskeleton. At high concentrations, profilin prevents the polymerization of actin, whereas it enhances it at low concentrations. By binding to PIP2, it inhibits the formation of IP3 and DG. The protein is Profilin (PRO1) of Cynodon dactylon (Bermuda grass).